Consider the following 689-residue polypeptide: DNA-directed RNA polymerase subunit beta' (689 aa).

C69, C71, C87, and C90 together coordinate Zn(2+). Mg(2+) contacts are provided by D489, D491, and D493.

It belongs to the RNA polymerase beta' chain family. RpoC1 subfamily. In terms of assembly, in plastids the minimal PEP RNA polymerase catalytic core is composed of four subunits: alpha, beta, beta', and beta''. When a (nuclear-encoded) sigma factor is associated with the core the holoenzyme is formed, which can initiate transcription. It depends on Mg(2+) as a cofactor. The cofactor is Zn(2+).

Its subcellular location is the plastid. The protein resides in the chloroplast. The enzyme catalyses RNA(n) + a ribonucleoside 5'-triphosphate = RNA(n+1) + diphosphate. Its function is as follows. DNA-dependent RNA polymerase catalyzes the transcription of DNA into RNA using the four ribonucleoside triphosphates as substrates. In Lactuca sativa (Garden lettuce), this protein is DNA-directed RNA polymerase subunit beta'.